The sequence spans 161 residues: Anaerobic nitrite reductase GLB1 (161 aa).

The region spanning 9 to 157 (VFTEEQEALV…LVAAIKSEMK (149 aa)) is the Globin domain. The Homodimerization signature appears at 42-46 (EIAPS). The heme b site is built by serine 52, lysine 66, histidine 70, arginine 100, and histidine 105. Residues 112-123 (NEHFETRFALLE) carry the Homodimerization motif.

Belongs to the plant globin family. Homodimer. It depends on heme b as a cofactor. Root specific.

The protein resides in the cytoplasm. It localises to the nucleus. It carries out the reaction Fe(III)-heme b-[protein] + nitric oxide + H2O = Fe(II)-heme b-[protein] + nitrite + 2 H(+). Functionally, phytoglobin that reduces nitrite to nitric oxide (NO) under anoxic conditions (e.g. during flooding or in waterlogged soil) and upon root nodulation. Required for general plant development and during nodulation, especially for the onset of symbiosis. Monitors nitric oxide (NO) levels during early phase of the nitrogen-fixing symbiosis and buffers oxygen in functioning nodules. May not function as an oxygen storage or transport protein. Has an unusually high affinity for O(2) through a hexacoordinate heme iron because of a very low dissociation constant. This chain is Anaerobic nitrite reductase GLB1 (GLB1), found in Trema tomentosum (Peach-leaf poison-bush).